The following is a 438-amino-acid chain: Probable inactive protein kinase 38 (438 aa).

The Protein kinase domain occupies P77–L340.

It belongs to the protein kinase superfamily. Tyr protein kinase family.

This is Probable inactive protein kinase 38 (36) from Equus caballus (Horse).